Here is a 251-residue protein sequence, read N- to C-terminus: MLKNRIIPCLDVKNGRVVKGINFVDLKDAGDPVEQAKIYSDGGADEICFLDITASKENRDTIYDVVERTSKKCFVPLTVGGGVRGVEDINKLLNCGADKVSINTAAVQSPEMIIESSKKFGSQCIVVAIDAKKNGDKWEVFTHGGRNNTNIDAIEFAKKMEDNGAGELLVTSMDRDGTQIGYDNDLMFKISSTVNIPIIASGGVGNLDHLVDGIRLGNASAVLAASIFHYGTHSINEAKQYLNSKGIPVRI.

Catalysis depends on residues D11 and D130.

Belongs to the HisA/HisF family. In terms of assembly, heterodimer of HisH and HisF.

The protein resides in the cytoplasm. It catalyses the reaction 5-[(5-phospho-1-deoxy-D-ribulos-1-ylimino)methylamino]-1-(5-phospho-beta-D-ribosyl)imidazole-4-carboxamide + L-glutamine = D-erythro-1-(imidazol-4-yl)glycerol 3-phosphate + 5-amino-1-(5-phospho-beta-D-ribosyl)imidazole-4-carboxamide + L-glutamate + H(+). Its pathway is amino-acid biosynthesis; L-histidine biosynthesis; L-histidine from 5-phospho-alpha-D-ribose 1-diphosphate: step 5/9. In terms of biological role, IGPS catalyzes the conversion of PRFAR and glutamine to IGP, AICAR and glutamate. The HisF subunit catalyzes the cyclization activity that produces IGP and AICAR from PRFAR using the ammonia provided by the HisH subunit. The sequence is that of Imidazole glycerol phosphate synthase subunit HisF from Pelagibacter ubique (strain HTCC1062).